The chain runs to 312 residues: MRRQQERKSMPDAVKKVYLIHGWGANRHVFDDLMPRLPATWPVSAVDLPGHGDAPFAQPFDIEAAADAVAAQIDTPADILGWSLGGLVALYLAARHPDKVRSLCLTASFARLTADEDYPEGLAAPALGKMVGAFRTDYAKHIKQFLQLQLLHTPDADGIIGRILPDLARCGTPSALQEALDAAERADARHLLDKIDVPVLLVFGGKDAITPPRMGEYLHRRLKGSRLVVMEKAAHAPFLSHAEAFAALYRDFVEGVLDEPSGRTLAGLPPSCRTCRPTPDTRPQRAQTYPACRGGCGHQPQPAGETLSAGGI.

An AB hydrolase-1 domain is found at 17 to 241; sequence VYLIHGWGAN…KAAHAPFLSH (225 aa). Residues Trp23, 83 to 84, and 145 to 149 each bind substrate; these read SL and FLQLQ. The Nucleophile role is filled by Ser83. Catalysis depends on residues Asp207 and His235. Residue His235 coordinates substrate.

It belongs to the AB hydrolase superfamily. Carboxylesterase BioH family. As to quaternary structure, monomer.

It localises to the cytoplasm. The catalysed reaction is 6-carboxyhexanoyl-[ACP] methyl ester + H2O = 6-carboxyhexanoyl-[ACP] + methanol + H(+). It participates in cofactor biosynthesis; biotin biosynthesis. Functionally, the physiological role of BioH is to remove the methyl group introduced by BioC when the pimeloyl moiety is complete. It allows to synthesize pimeloyl-ACP via the fatty acid synthetic pathway through the hydrolysis of the ester bonds of pimeloyl-ACP esters. The polypeptide is Pimeloyl-[acyl-carrier protein] methyl ester esterase (Neisseria meningitidis serogroup A / serotype 4A (strain DSM 15465 / Z2491)).